The sequence spans 960 residues: Leucine-rich repeat receptor-like serine/threonine-protein kinase SKM1 (960 aa).

The first 29 residues, 1–29 (MSTSHHHHHPPYLITTLFFLFLNFSCLHA), serve as a signal peptide directing secretion. The Extracellular portion of the chain corresponds to 30-634 (NELELLLSFK…VRKRSTKSWW (605 aa)). A disulfide bond links Cys61 and Cys68. Asn70, Asn83, Asn103, Asn108, Asn129, and Asn134 each carry an N-linked (GlcNAc...) asparagine glycan. LRR repeat units follow at residues 71-96 (ISRV…TFRL), 97-120 (PFLQ…IFTT), 122-146 (SPSL…FLPN), 149-168 (TLDL…IGVF), 169-194 (SNLR…NLSR), 196-216 (EFLT…LGKM), 217-240 (KNLK…IGGL), 241-264 (SSLN…LGDL), 265-288 (KKLE…IFSL), 290-312 (NLIS…VAQM), 313-336 (QSLE…VTSL), 338-360 (RLKV…LGKH), 361-384 (NNLT…LCDS), 386-408 (HLTK…LGMC), 409-432 (QSLE…FTKL), 434-454 (LVNF…TWDM), 455-477 (PQLE…FSRS), 478-501 (KRLK…LMTF), 503-525 (EIMD…LSSC), 526-549 (KNLV…FAEF), 550-573 (QVLS…LGNI), and 575-598 (SLVQ…AFLA). Asn191 carries N-linked (GlcNAc...) asparagine glycosylation. The CLE45 peptide binding signature appears at 221-226 (WIYLGY). Residues Asn228 and Asn252 are each glycosylated (N-linked (GlcNAc...) asparagine). Asn324 is a glycosylation site (N-linked (GlcNAc...) asparagine). Residues Asn362 and Asn372 are each glycosylated (N-linked (GlcNAc...) asparagine). Asn537 carries an N-linked (GlcNAc...) asparagine glycan. N-linked (GlcNAc...) asparagine glycans are attached at residues Asn580 and Asn600. Residues 635 to 655 (LIITSTFAAFLAVLVSGFFIV) traverse the membrane as a helical segment. The Cytoplasmic segment spans residues 656–960 (LVFQRTHNVL…TYLSKILSLA (305 aa)). A Protein kinase domain is found at 691–953 (FTVNTILSSL…SSSSSCTTYL (263 aa)). Thr692 bears the Phosphothreonine mark. Residues 697–705 (LSSLKDQNV) and Lys717 contribute to the ATP site. Tyr834 is subject to Phosphotyrosine.

This sequence belongs to the protein kinase superfamily. Ser/Thr protein kinase family. In terms of assembly, self-interacts. Binds to CLE45 present in the pistil, particularly under relatively high temperature (at 30 degrees Celsius). In terms of tissue distribution, expressed in pollen grains and roots vascular tissues. Present in roots.

The protein resides in the cell membrane. It catalyses the reaction L-seryl-[protein] + ATP = O-phospho-L-seryl-[protein] + ADP + H(+). The catalysed reaction is L-threonyl-[protein] + ATP = O-phospho-L-threonyl-[protein] + ADP + H(+). Functionally, receptor with a serine/threonine-protein kinase activity. Together with SKM2, LRR-rich receptor-like kinase (LRR-RLK) required for male fertility by the perception of CLE43 and CLE45 peptides and the transduction of their promoting action in pollen tubes, especially under relatively high temperature (at 30 degrees Celsius), thus conferring tolerance against high temperature probably through the maintenance of mitochondrial activity. Seems to not be involved in the perception of CLE45 peptide in roots. The chain is Leucine-rich repeat receptor-like serine/threonine-protein kinase SKM1 from Arabidopsis thaliana (Mouse-ear cress).